The following is a 608-amino-acid chain: Threonine--tRNA ligase (608 aa).

Residues 1 to 143 (MRVLYIHAER…SFKPEEGRAD (143 aa)) are editing domain. 2 catalytic regions span residues 194–490 (PKYL…PRLP) and 195–490 (KYLE…PRLP). Residues C287, H338, and H459 each contribute to the Zn(2+) site.

The protein belongs to the class-II aminoacyl-tRNA synthetase family. Homodimer. Zn(2+) serves as cofactor.

The protein localises to the cytoplasm. It carries out the reaction tRNA(Thr) + L-threonine + ATP = L-threonyl-tRNA(Thr) + AMP + diphosphate + H(+). Functionally, catalyzes the attachment of threonine to tRNA(Thr) in a two-step reaction: L-threonine is first activated by ATP to form Thr-AMP and then transferred to the acceptor end of tRNA(Thr). Also edits incorrectly charged L-seryl-tRNA(Thr). The protein is Threonine--tRNA ligase of Pyrobaculum aerophilum (strain ATCC 51768 / DSM 7523 / JCM 9630 / CIP 104966 / NBRC 100827 / IM2).